A 346-amino-acid polypeptide reads, in one-letter code: Serpentine receptor class beta-11 (346 aa).

A run of 7 helical transmembrane segments spans residues 26 to 46, 57 to 77, 102 to 122, 139 to 159, 186 to 206, 239 to 259, and 278 to 298; these read YQMI…LFKL, TIFI…LTTS, IWNF…CSVT, SVVM…CIIF, FTFF…DLIL, VFLI…VVFF, and TFST…SSFF.

Belongs to the nematode receptor-like protein srb family.

The protein localises to the membrane. In Caenorhabditis elegans, this protein is Serpentine receptor class beta-11 (srb-11).